Here is a 138-residue protein sequence, read N- to C-terminus: Lutropin subunit beta (138 aa).

The signal sequence occupies residues 1 to 19; that stretch reads RYQELTVLLLLLLEGGSWG. Intrachain disulfides connect Cys-27–Cys-75, Cys-41–Cys-90, Cys-44–Cys-128, Cys-52–Cys-106, Cys-56–Cys-108, and Cys-111–Cys-118. Asn-31 is a glycosylation site (N-linked (GlcNAc...) asparagine).

This sequence belongs to the glycoprotein hormones subunit beta family. Heterodimer of a common alpha chain and a unique beta chain which confers biological specificity to thyrotropin, lutropin, follitropin and gonadotropin.

Its subcellular location is the secreted. Promotes spermatogenesis and ovulation by stimulating the testes and ovaries to synthesize steroids. The polypeptide is Lutropin subunit beta (LHB) (Osphranter rufus (Red kangaroo)).